The chain runs to 582 residues: NudC domain-containing protein 1 (582 aa).

At Ser-7 the chain carries Phosphoserine. The region spanning 272–360 (KVEPLYYWQQ…NEGLMWPELV (89 aa)) is the CS domain. The residue at position 387 (Ser-387) is a Phosphoserine.

It is found in the cytoplasm. The protein resides in the nucleus. The polypeptide is NudC domain-containing protein 1 (Mus musculus (Mouse)).